Consider the following 392-residue polypeptide: Formate-dependent phosphoribosylglycinamide formyltransferase (392 aa).

N(1)-(5-phospho-beta-D-ribosyl)glycinamide-binding positions include 12–13 (EL) and E72. Residues R104, K145, 150-155 (SSGKGQ), 185-188 (EAFV), and E193 each bind ATP. Residues 109–300 (DLAARDLGLR…EFELHARAVL (192 aa)) form the ATP-grasp domain. Residues E258 and E270 each coordinate Mg(2+). Residues D277, K348, and 355–356 (RR) each bind N(1)-(5-phospho-beta-D-ribosyl)glycinamide.

It belongs to the PurK/PurT family. Homodimer.

It catalyses the reaction N(1)-(5-phospho-beta-D-ribosyl)glycinamide + formate + ATP = N(2)-formyl-N(1)-(5-phospho-beta-D-ribosyl)glycinamide + ADP + phosphate + H(+). It functions in the pathway purine metabolism; IMP biosynthesis via de novo pathway; N(2)-formyl-N(1)-(5-phospho-D-ribosyl)glycinamide from N(1)-(5-phospho-D-ribosyl)glycinamide (formate route): step 1/1. Involved in the de novo purine biosynthesis. Catalyzes the transfer of formate to 5-phospho-ribosyl-glycinamide (GAR), producing 5-phospho-ribosyl-N-formylglycinamide (FGAR). Formate is provided by PurU via hydrolysis of 10-formyl-tetrahydrofolate. The polypeptide is Formate-dependent phosphoribosylglycinamide formyltransferase (Chlorobaculum tepidum (strain ATCC 49652 / DSM 12025 / NBRC 103806 / TLS) (Chlorobium tepidum)).